Consider the following 229-residue polypeptide: Ribosomal RNA large subunit methyltransferase E (229 aa).

A disordered region spans residues 1–20; sequence MSRAGNGGRQRIKTAKGRSA. Glycine 75, tryptophan 77, aspartate 94, aspartate 110, and aspartate 134 together coordinate S-adenosyl-L-methionine. Catalysis depends on lysine 174, which acts as the Proton acceptor.

Belongs to the class I-like SAM-binding methyltransferase superfamily. RNA methyltransferase RlmE family.

Its subcellular location is the cytoplasm. It catalyses the reaction uridine(2552) in 23S rRNA + S-adenosyl-L-methionine = 2'-O-methyluridine(2552) in 23S rRNA + S-adenosyl-L-homocysteine + H(+). In terms of biological role, specifically methylates the uridine in position 2552 of 23S rRNA at the 2'-O position of the ribose in the fully assembled 50S ribosomal subunit. The chain is Ribosomal RNA large subunit methyltransferase E from Rhizorhabdus wittichii (strain DSM 6014 / CCUG 31198 / JCM 15750 / NBRC 105917 / EY 4224 / RW1) (Sphingomonas wittichii).